We begin with the raw amino-acid sequence, 277 residues long: Inhibition of morphological differentiation protein (277 aa).

Mg(2+) contacts are provided by Asp-18, Asp-20, and Asp-192.

This sequence belongs to the HAD-like hydrolase superfamily. SerB family.

The chain is Inhibition of morphological differentiation protein from Streptomyces azureus.